Consider the following 665-residue polypeptide: tRNA 5-methylaminomethyl-2-thiouridine biosynthesis bifunctional protein MnmC (665 aa).

Residues 1-243 (MSQTSLHHAR…KREMLAGERA (243 aa)) are tRNA (mnm(5)s(2)U34)-methyltransferase. The segment at 268–665 (IGGGIASAMT…RKLLKGKPLQ (398 aa)) is FAD-dependent cmnm(5)s(2)U34 oxidoreductase.

This sequence in the N-terminal section; belongs to the methyltransferase superfamily. tRNA (mnm(5)s(2)U34)-methyltransferase family. The protein in the C-terminal section; belongs to the DAO family. Requires FAD as cofactor.

It is found in the cytoplasm. It catalyses the reaction 5-aminomethyl-2-thiouridine(34) in tRNA + S-adenosyl-L-methionine = 5-methylaminomethyl-2-thiouridine(34) in tRNA + S-adenosyl-L-homocysteine + H(+). Functionally, catalyzes the last two steps in the biosynthesis of 5-methylaminomethyl-2-thiouridine (mnm(5)s(2)U) at the wobble position (U34) in tRNA. Catalyzes the FAD-dependent demodification of cmnm(5)s(2)U34 to nm(5)s(2)U34, followed by the transfer of a methyl group from S-adenosyl-L-methionine to nm(5)s(2)U34, to form mnm(5)s(2)U34. In Aeromonas hydrophila subsp. hydrophila (strain ATCC 7966 / DSM 30187 / BCRC 13018 / CCUG 14551 / JCM 1027 / KCTC 2358 / NCIMB 9240 / NCTC 8049), this protein is tRNA 5-methylaminomethyl-2-thiouridine biosynthesis bifunctional protein MnmC.